A 185-amino-acid chain; its full sequence is Neuronal vesicle trafficking-associated protein 1 (185 aa).

Residues Met-1–Lys-82 are Cytoplasmic-facing. A helical; Signal-anchor for type II membrane protein transmembrane segment spans residues Val-83 to Tyr-103. At Lys-104–Ala-185 the chain is on the lumenal side.

The protein belongs to the NSG family.

It localises to the membrane. Its subcellular location is the golgi apparatus. The protein localises to the trans-Golgi network membrane. The protein resides in the endosome membrane. It is found in the cell projection. It localises to the dendrite. Its subcellular location is the early endosome membrane. The protein localises to the late endosome membrane. The protein resides in the lysosome lumen. It is found in the recycling endosome membrane. It localises to the cytoplasmic vesicle membrane. Its subcellular location is the golgi stack membrane. The protein localises to the endosome. The protein resides in the multivesicular body membrane. Plays a role in the recycling mechanism in neurons of multiple receptors and acts at the level of early endosomes to promote sorting of receptors toward a recycling pathway. This is Neuronal vesicle trafficking-associated protein 1 from Gallus gallus (Chicken).